Consider the following 65-residue polypeptide: Translational regulator CsrA (65 aa).

Belongs to the CsrA/RsmA family. Homodimer; the beta-strands of each monomer intercalate to form a hydrophobic core, while the alpha-helices form wings that extend away from the core.

It is found in the cytoplasm. A translational regulator that binds mRNA to regulate translation initiation and/or mRNA stability. Usually binds in the 5'-UTR at or near the Shine-Dalgarno sequence preventing ribosome-binding, thus repressing translation. Its main target seems to be the major flagellin gene, while its function is anatagonized by FliW. The protein is Translational regulator CsrA of Bordetella petrii (strain ATCC BAA-461 / DSM 12804 / CCUG 43448).